Consider the following 469-residue polypeptide: MVKTLYEKLFDSHIVYEAEGETPILYINRHLIHEVTSPQAFDGLRVANRQVRQVNKTFGTMDHSISTQVRDVNKLEGQAKIQVLELDKNTKATGIKLFDITTKEQGIVHVMGPEQGLTLPGMTIVCGDSHTATHGAFGALAFGIGTSEVEHVLATQTLKQARAKSMKIEVRGKVASGITAKDIILAIIGKTTMAGGTGHVVEFCGEAIRDLSMEGRMTVCNMAIEMGAKAGLIAPDETTFAYLKDRPHAPKGKDWDDAVAYWKTLQSDDDAQFDTVVTLEAKDIAPQVTWGTNPGQVISVNETIPNPQEMADLVQRASAEKALHYIGLEAGTNLKEVKVDQVFIGSCTNSRIEDLRAAAAVMKGRKKADNVKRILVVPGSGLVKEQAEKEGLDKIFIAAGAEWRNPGCSMCLGMNDDRLGEWERCASTSNRNFEGRQGRNGRTHLVSPAMAAAAGMFGKFVDIREVALN.

3 residues coordinate [4Fe-4S] cluster: Cys-347, Cys-408, and Cys-411.

Belongs to the aconitase/IPM isomerase family. LeuC type 1 subfamily. As to quaternary structure, heterodimer of LeuC and LeuD. It depends on [4Fe-4S] cluster as a cofactor.

The enzyme catalyses (2R,3S)-3-isopropylmalate = (2S)-2-isopropylmalate. It participates in amino-acid biosynthesis; L-leucine biosynthesis; L-leucine from 3-methyl-2-oxobutanoate: step 2/4. Functionally, catalyzes the isomerization between 2-isopropylmalate and 3-isopropylmalate, via the formation of 2-isopropylmaleate. The chain is 3-isopropylmalate dehydratase large subunit from Haemophilus influenzae (strain PittEE).